A 916-amino-acid polypeptide reads, in one-letter code: Oxoglutarate dehydrogenase (916 aa).

It belongs to the alpha-ketoglutarate dehydrogenase family. In terms of assembly, homodimer. Part of the 2-oxoglutarate dehydrogenase (OGDH) complex composed of E1 (2-oxoglutarate dehydrogenase), E2 (dihydrolipoamide succinyltransferase) and E3 (dihydrolipoamide dehydrogenase); the complex contains multiple copies of the three enzymatic components (E1, E2 and E3). Requires thiamine diphosphate as cofactor.

The catalysed reaction is N(6)-[(R)-lipoyl]-L-lysyl-[protein] + 2-oxoglutarate + H(+) = N(6)-[(R)-S(8)-succinyldihydrolipoyl]-L-lysyl-[protein] + CO2. E1 component of the 2-oxoglutarate dehydrogenase (OGDH) complex which catalyzes the decarboxylation of 2-oxoglutarate, the first step in the conversion of 2-oxoglutarate to succinyl-CoA and CO(2). This Buchnera aphidicola subsp. Baizongia pistaciae (strain Bp) protein is Oxoglutarate dehydrogenase (sucA).